The chain runs to 289 residues: UPF0173 metal-dependent hydrolase H16_A2129 (289 aa).

The protein belongs to the UPF0173 family.

The protein is UPF0173 metal-dependent hydrolase H16_A2129 of Cupriavidus necator (strain ATCC 17699 / DSM 428 / KCTC 22496 / NCIMB 10442 / H16 / Stanier 337) (Ralstonia eutropha).